We begin with the raw amino-acid sequence, 406 residues long: Cysteine desulfurase (406 aa).

Residue K226 is modified to N6-(pyridoxal phosphate)lysine. C364 (cysteine persulfide intermediate) is an active-site residue.

The protein belongs to the class-V pyridoxal-phosphate-dependent aminotransferase family. Csd subfamily. Homodimer. Interacts with SufE and the SufBCD complex composed of SufB, SufC and SufD. The interaction with SufE is required to mediate the direct transfer of the sulfur atom from the S-sulfanylcysteine. The cofactor is pyridoxal 5'-phosphate.

It localises to the cytoplasm. It catalyses the reaction (sulfur carrier)-H + L-cysteine = (sulfur carrier)-SH + L-alanine. It carries out the reaction L-selenocysteine + AH2 = hydrogenselenide + L-alanine + A + H(+). Its pathway is cofactor biosynthesis; iron-sulfur cluster biosynthesis. Cysteine desulfurases mobilize the sulfur from L-cysteine to yield L-alanine, an essential step in sulfur metabolism for biosynthesis of a variety of sulfur-containing biomolecules. Component of the suf operon, which is activated and required under specific conditions such as oxidative stress and iron limitation. Acts as a potent selenocysteine lyase in vitro, that mobilizes selenium from L-selenocysteine. Selenocysteine lyase activity is however unsure in vivo. This is Cysteine desulfurase from Escherichia coli O157:H7 (strain EC4115 / EHEC).